Here is a 161-residue protein sequence, read N- to C-terminus: Regulator of ribonuclease activity A (161 aa).

It belongs to the RraA family. As to quaternary structure, homotrimer. Binds to both RNA-binding sites in the C-terminal region of Rne and to RhlB.

The protein localises to the cytoplasm. Its function is as follows. Globally modulates RNA abundance by binding to RNase E (Rne) and regulating its endonucleolytic activity. Can modulate Rne action in a substrate-dependent manner by altering the composition of the degradosome. Modulates RNA-binding and helicase activities of the degradosome. This Shigella boydii serotype 18 (strain CDC 3083-94 / BS512) protein is Regulator of ribonuclease activity A.